Reading from the N-terminus, the 56-residue chain is TauPI-stichotoxin-Hcr2c (56 aa).

The BPTI/Kunitz inhibitor domain occupies 4–54; it reads CLEPKVVGPCTAYFRRFYFDSETGKCTPFIYGGCEGNGNNFETLRACRAIC. Disulfide bonds link Cys-4-Cys-54, Cys-13-Cys-37, and Cys-29-Cys-50.

Belongs to the venom Kunitz-type family. Sea anemone type 2 potassium channel toxin subfamily.

The protein resides in the secreted. It localises to the nematocyst. In terms of biological role, this protease inhibitor shows two different activities, it inhibits both the capsaicin receptor TRPV1 and serine proteases. It partially (max 50%) and reversibly inhibits mammalian TRPV1, a non-selective cation channel expressed by sensory neurons of the pain pathway). The second activity is a weak inhibition of trypsin and chymotrypsin activity (Ki=0.9 uM and Ki=4.5 uM, respectively). In vivo, shows analgesic effects on mammals. This is TauPI-stichotoxin-Hcr2c from Radianthus crispa (Leathery sea anemone).